The sequence spans 129 residues: Small ribosomal subunit protein uS11 (129 aa).

It belongs to the universal ribosomal protein uS11 family. In terms of assembly, part of the 30S ribosomal subunit. Interacts with proteins S7 and S18. Binds to IF-3.

Its function is as follows. Located on the platform of the 30S subunit, it bridges several disparate RNA helices of the 16S rRNA. Forms part of the Shine-Dalgarno cleft in the 70S ribosome. This chain is Small ribosomal subunit protein uS11, found in Francisella tularensis subsp. holarctica (strain FTNF002-00 / FTA).